The primary structure comprises 274 residues: Urease accessory protein UreD (274 aa).

Belongs to the UreD family. UreD, UreF and UreG form a complex that acts as a GTP-hydrolysis-dependent molecular chaperone, activating the urease apoprotein by helping to assemble the nickel containing metallocenter of UreC. The UreE protein probably delivers the nickel.

It is found in the cytoplasm. In terms of biological role, required for maturation of urease via the functional incorporation of the urease nickel metallocenter. This is Urease accessory protein UreD from Lachnoclostridium phytofermentans (strain ATCC 700394 / DSM 18823 / ISDg) (Clostridium phytofermentans).